Reading from the N-terminus, the 310-residue chain is Olfactory receptor 7A42 (310 aa).

Over 1–25 (MESGNSTRRIPSFFLLGFSENPHLQ) the chain is Extracellular. Asn-5 is a glycosylation site (N-linked (GlcNAc...) asparagine). A helical transmembrane segment spans residues 26 to 46 (FLIFVLFLSMYLVTVLGNLLI). Residues 47 to 67 (IMVIITQSPLHTPMYFFLANL) lie on the Cytoplasmic side of the membrane. A helical transmembrane segment spans residues 68-88 (SFVDICFTSTTVPKMLVNIQT). Over 89 to 100 (QSKAITYADCIS) the chain is Extracellular. Cys-98 and Cys-190 are disulfide-bonded. Residues 101–121 (QMSVFLVFAELDNFLLAVMAY) traverse the membrane as a helical segment. Over 122–135 (DRYVAICHPLYYTF) the chain is Cytoplasmic. A helical membrane pass occupies residues 136 to 156 (IVNQHLCILMVLLSWVVSILH). At 157-202 (AFLQSSIVLQLTFCGDVKIPHFFCELNQLSQLTCLDSLSSHLIMNL) the chain is on the extracellular side. Residues 203–223 (VPVLLAVISFSSILYSYFKIV) form a helical membrane-spanning segment. Over 224–240 (SSICSISSVQGKYTAFS) the chain is Cytoplasmic. A helical transmembrane segment spans residues 241–261 (TCVSHLSIVFLFYSTGLGVYV). Topologically, residues 262-272 (SSAVVQSSHSA) are extracellular. A helical membrane pass occupies residues 273-293 (ARASVMYTVVTPMLNPFIYSL). Over 294–310 (RNKDVKKALERLLEGKL) the chain is Cytoplasmic.

Belongs to the G-protein coupled receptor 1 family.

Its subcellular location is the cell membrane. Odorant receptor. This chain is Olfactory receptor 7A42, found in Mus musculus (Mouse).